Consider the following 404-residue polypeptide: Argininosuccinate synthase (404 aa).

ATP contacts are provided by residues Ala10 to Ser18 and Ala37. L-citrulline is bound by residues Tyr89 and Ser94. Gly119 is a binding site for ATP. The L-aspartate site is built by Thr121, Asn125, and Asp126. Position 125 (Asn125) interacts with L-citrulline. L-citrulline-binding residues include Arg129, Ser178, Ser187, Glu263, and Tyr275.

The protein belongs to the argininosuccinate synthase family. Type 1 subfamily. Homotetramer.

The protein localises to the cytoplasm. It catalyses the reaction L-citrulline + L-aspartate + ATP = 2-(N(omega)-L-arginino)succinate + AMP + diphosphate + H(+). It participates in amino-acid biosynthesis; L-arginine biosynthesis; L-arginine from L-ornithine and carbamoyl phosphate: step 2/3. The polypeptide is Argininosuccinate synthase (Photobacterium profundum (strain SS9)).